The sequence spans 168 residues: Peptide deformylase 1 (168 aa).

Positions 91 and 133 each coordinate Fe cation. Residue E134 is part of the active site. Residue H137 participates in Fe cation binding.

This sequence belongs to the polypeptide deformylase family. Fe(2+) serves as cofactor.

The enzyme catalyses N-terminal N-formyl-L-methionyl-[peptide] + H2O = N-terminal L-methionyl-[peptide] + formate. Removes the formyl group from the N-terminal Met of newly synthesized proteins. Requires at least a dipeptide for an efficient rate of reaction. N-terminal L-methionine is a prerequisite for activity but the enzyme has broad specificity at other positions. This is Peptide deformylase 1 from Vibrio vulnificus (strain YJ016).